A 92-amino-acid polypeptide reads, in one-letter code: Large ribosomal subunit protein bL34m (92 aa).

Residues 1 to 46 (MAFLARCFGCQACRSVALLSGRYLQSRVWMGLPDSWPLLSLQQARG) constitute a mitochondrion transit peptide. S71 is modified (phosphoserine).

It belongs to the bacterial ribosomal protein bL34 family. Component of the mitochondrial ribosome large subunit (39S) which comprises a 16S rRNA and about 50 distinct proteins.

Its subcellular location is the mitochondrion. The protein is Large ribosomal subunit protein bL34m (Mrpl34) of Mus musculus (Mouse).